A 205-amino-acid polypeptide reads, in one-letter code: Ribosomal RNA small subunit methyltransferase G (205 aa).

S-adenosyl-L-methionine is bound by residues Gly71, Phe76, 120–121 (IE), and Arg134.

This sequence belongs to the methyltransferase superfamily. RNA methyltransferase RsmG family.

Its subcellular location is the cytoplasm. It catalyses the reaction guanosine(527) in 16S rRNA + S-adenosyl-L-methionine = N(7)-methylguanosine(527) in 16S rRNA + S-adenosyl-L-homocysteine. In terms of biological role, specifically methylates the N7 position of guanine in position 527 of 16S rRNA. This Paramagnetospirillum magneticum (strain ATCC 700264 / AMB-1) (Magnetospirillum magneticum) protein is Ribosomal RNA small subunit methyltransferase G.